A 24-amino-acid chain; its full sequence is Homotarsinin (24 aa).

The residue at position 24 (Arg-24) is an Arginine amide.

Homodimer; disulfide-linked. In terms of tissue distribution, expressed by the skin glands.

Its subcellular location is the secreted. In terms of biological role, antimicrobial peptide. Active against Gram-negative bacteria E.coli ATCC 25922 (MIC=1.5 uM) and P.aeruginosa ATTC 27853 (MIC=23.2 uM) and against Gram-positive bacterium S.aureus ATCC 29313 (MIC=11.6 uM). Has no hemolytic activity. Associates with and disrupts membranes in vitro. The protein is Homotarsinin of Phyllomedusa tarsius (Brownbelly leaf frog).